The primary structure comprises 223 residues: Ubiquinone biosynthesis protein COQ4 homolog 2, mitochondrial (223 aa).

Residues 1 to 26 constitute a mitochondrion transit peptide; sequence MFLRRVHPVRLGHAIQRSLTTTKSRN. Residues 21–32 are compositionally biased toward low complexity; it reads TTKSRNESTTTT. Positions 21–43 are disordered; it reads TTKSRNESTTTTVEAPQAVPSPP. His177, Asp178, His181, and Glu193 together coordinate Zn(2+).

The protein belongs to the COQ4 family. As to quaternary structure, component of a multi-subunit COQ enzyme complex. Zn(2+) serves as cofactor.

Its subcellular location is the mitochondrion inner membrane. The enzyme catalyses a 4-hydroxy-3-methoxy-5-(all-trans-polyprenyl)benzoate + H(+) = a 2-methoxy-6-(all-trans-polyprenyl)phenol + CO2. Its pathway is cofactor biosynthesis; ubiquinone biosynthesis. Functionally, lyase that catalyzes the C1-decarboxylation of 4-hydroxy-3-methoxy-5-(all-trans-polyprenyl)benzoic acid into 2-methoxy-6-(all-trans-polyprenyl)phenol during ubiquinone biosynthesis. The sequence is that of Ubiquinone biosynthesis protein COQ4 homolog 2, mitochondrial from Culex quinquefasciatus (Southern house mosquito).